The primary structure comprises 356 residues: UDP-3-O-acylglucosamine N-acyltransferase (356 aa).

The active-site Proton acceptor is the His-251.

Belongs to the transferase hexapeptide repeat family. LpxD subfamily. In terms of assembly, homotrimer.

It catalyses the reaction a UDP-3-O-[(3R)-3-hydroxyacyl]-alpha-D-glucosamine + a (3R)-hydroxyacyl-[ACP] = a UDP-2-N,3-O-bis[(3R)-3-hydroxyacyl]-alpha-D-glucosamine + holo-[ACP] + H(+). It functions in the pathway bacterial outer membrane biogenesis; LPS lipid A biosynthesis. Catalyzes the N-acylation of UDP-3-O-acylglucosamine using 3-hydroxyacyl-ACP as the acyl donor. Is involved in the biosynthesis of lipid A, a phosphorylated glycolipid that anchors the lipopolysaccharide to the outer membrane of the cell. This chain is UDP-3-O-acylglucosamine N-acyltransferase, found in Ralstonia nicotianae (strain ATCC BAA-1114 / GMI1000) (Ralstonia solanacearum).